Consider the following 159-residue polypeptide: uncharacterized protein (159 aa).

Over residues 1–13 the composition is skewed to polar residues; sequence MTQPTRPSVTCDQ. Residues 1–57 form a disordered region; that stretch reads MTQPTRPSVTCDQGSSTIGGTAAQATTSSSATSGSNYQRDRLGRRPEIGVGGQPQIC. The span at 14-35 shows a compositional bias: low complexity; the sequence is GSSTIGGTAAQATTSSSATSGS. A compositionally biased stretch (basic and acidic residues) spans 38–47; sequence QRDRLGRRPE.

This is an uncharacterized protein from Homo sapiens (Human).